We begin with the raw amino-acid sequence, 465 residues long: Beta-1,2-xylosyltransferase XYXT1 (465 aa).

At 1-11 (MKAAVRSKKSK) the chain is on the cytoplasmic side. The helical; Signal-anchor for type II membrane protein transmembrane segment at 12–32 (GSFCHPPLLLLIVAIQFLVIY) threads the bilayer. Over 33–465 (SPTLDQYMVM…VLLKALHLLR (433 aa)) the chain is Lumenal. 5 N-linked (GlcNAc...) asparagine glycosylation sites follow: asparagine 80, asparagine 118, asparagine 125, asparagine 266, and asparagine 403.

The protein belongs to the glycosyltransferase 61 family. As to expression, widely expressed.

The protein resides in the golgi apparatus membrane. It functions in the pathway glycan metabolism. Glycosyltransferase involved in the xylosylation of xylan, the major hemicellulose (non-cellulosic component) of primary and secondary walls of angiosperms. Possesses beta-1,2-xylosyltransferase activity, transferring xylose from UDP-xylose to the xylan backbone. Catalyzes the addition of 2-O-xylosyl side chains to the xylan backbone. The protein is Beta-1,2-xylosyltransferase XYXT1 of Oryza sativa subsp. japonica (Rice).